Reading from the N-terminus, the 354-residue chain is MLDLRGDPIELTAALIDIPSESRKEARIADEVEAALRAQASGFEIIRNGNAVLARTKLNRSSRVLLAGHLDTVPVAGNLPSRRENDQLHGCGAADMKSGDAVFLHLAATLAEPTHDLTLVFYDCEEIDSAANGLGRIQRELPDWLSADVAILGEPTAGCIEAGCQGTLRVVLSVTGTRAHSARSWLGDNAIHKLGAVLDRLAVYRARSVDIDGCTYREGLSAVRVAGGVAGNVIPDAASVTINYRFAPDRSVAAALQHVHDVFDGLDVQIEQTDAAAGALPGLSEPAAKALVEAAGGQVRAKYGWTDVSRFAALGIPAVNYGPGDPNLAHCRDERVPVGNITAAVDLLRRYLGG.

Residue His69 participates in Zn(2+) binding. Asp71 is a catalytic residue. Asp95 lines the Zn(2+) pocket. Glu125 acts as the Proton acceptor in catalysis. Residues Glu126, Glu154, and His330 each coordinate Zn(2+).

It belongs to the peptidase M20A family. In terms of assembly, homodimer. Requires Zn(2+) as cofactor. Co(2+) serves as cofactor.

It carries out the reaction N-succinyl-(2S,6S)-2,6-diaminopimelate + H2O = (2S,6S)-2,6-diaminopimelate + succinate. It functions in the pathway amino-acid biosynthesis; L-lysine biosynthesis via DAP pathway; LL-2,6-diaminopimelate from (S)-tetrahydrodipicolinate (succinylase route): step 3/3. Functionally, catalyzes the hydrolysis of N-succinyl-L,L-diaminopimelic acid (SDAP), forming succinate and LL-2,6-diaminoheptanedioate (DAP), an intermediate involved in the bacterial biosynthesis of lysine and meso-diaminopimelic acid. This is Putative succinyl-diaminopimelate desuccinylase DapE (dapE) from Mycobacterium tuberculosis (strain CDC 1551 / Oshkosh).